Consider the following 811-residue polypeptide: DNA gyrase subunit A (811 aa).

A Topo IIA-type catalytic domain is found at 30 to 493 (LPDVRDGLKP…LEEDIGKEDL (464 aa)). Residue Tyr118 is the O-(5'-phospho-DNA)-tyrosine intermediate of the active site. A GyrA-box motif is present at residues 520-526 (QGRGGRG).

It belongs to the type II topoisomerase GyrA/ParC subunit family. Heterotetramer, composed of two GyrA and two GyrB chains. In the heterotetramer, GyrA contains the active site tyrosine that forms a transient covalent intermediate with DNA, while GyrB binds cofactors and catalyzes ATP hydrolysis.

The protein resides in the cytoplasm. It catalyses the reaction ATP-dependent breakage, passage and rejoining of double-stranded DNA.. Its function is as follows. A type II topoisomerase that negatively supercoils closed circular double-stranded (ds) DNA in an ATP-dependent manner to modulate DNA topology and maintain chromosomes in an underwound state. Negative supercoiling favors strand separation, and DNA replication, transcription, recombination and repair, all of which involve strand separation. Also able to catalyze the interconversion of other topological isomers of dsDNA rings, including catenanes and knotted rings. Type II topoisomerases break and join 2 DNA strands simultaneously in an ATP-dependent manner. This is DNA gyrase subunit A from Deinococcus deserti (strain DSM 17065 / CIP 109153 / LMG 22923 / VCD115).